The chain runs to 225 residues: MADHMMAMNHSRFQDGTNGLHHPAHRMGMGQFPSPHHHQHTFNSLMGEHMHYVPGNMNSNNSIRHAMVTGNVNGGHPNGSIAPAARFNNSQFMGPPVTNQGAQLTASMQLQKLNNQYFTHQPYPHNHYIPDLHPTNHPLNGTNQHFKECNPKHSTGLPPSVSHVPAAILPPGVIDTDFIDEEVLMSLVIEMGLDRIKELPELWLGQNEFDFMTDFVCKQPNRVSC.

The protein belongs to the CITED family.

It is found in the nucleus. Functionally, transcriptional coactivator or corepressor of the p300/CBP-mediated transcription complex. May be involved in sex determination, early gonad development, left-right patterning during embryogenesis and differentiation of the adrenal cortex. This Xenopus laevis (African clawed frog) protein is Cbp/p300-interacting transactivator 2 (cited2).